The chain runs to 699 residues: Transcription factor MYC2 (699 aa).

The tract at residues 25-60 (PWGAASTPPPPPPPPHHHHQQQQQQVLPPPAAAPAA) is disordered. The JAZ-interaction domain stretch occupies residues 93 to 158 (IDVSTGASLL…AAPDEAVEEE (66 aa)). A disordered region spans residues 290–530 (DISVSKPPPP…EPLNHVEAER (241 aa)). Residues 306–321 (HFENGSTSTLTENPSP) show a composition bias toward polar residues. Composition is skewed to low complexity over residues 335–349 (PQRQ…QAQQ) and 387–412 (SSSG…PGSL). Polar residues-rich tracts occupy residues 413–449 (FSQH…NNHP) and 459–472 (SFSS…STGT). Residues 478–494 (SESDHSDLEASVREVES) are compositionally biased toward basic and acidic residues. A Nuclear localization signal motif is present at residues 506–514 (KRPRKRGRK). The span at 507 to 516 (RPRKRGRKPA) shows a compositional bias: basic residues. Basic and acidic residues predominate over residues 517-530 (NGREEPLNHVEAER). Positions 520–533 (EEPLNHVEAERQRR) are basic motif; degenerate. Residues 520–569 (EEPLNHVEAERQRREKLNQRFYALRAVVPNVSKMDKASLLGDAISYINEL) form the bHLH domain. The tract at residues 534-569 (EKLNQRFYALRAVVPNVSKMDKASLLGDAISYINEL) is helix-loop-helix motif. The segment at 582-611 (TLQSQMESLKKERDARPPAPSGGGGDGGAR) is disordered.

Belongs to the bHLH protein family. As to quaternary structure, interacts with TIFY3/JAZ1. In terms of tissue distribution, highly expressed in spikelets and floral organs.

The protein localises to the nucleus. Functionally, transcriptional activator involved in jasmonate (JA) signaling pathway during spikelet development. Binds to the G2 region G-box (5'-CACGTG-3') of the MADS1 promoter and thus directly regulates the expression of MADS1. Its function in MADS1 activation is abolished by TIFY3/JAZ1 which directly target MYC2 during spikelet development. In Oryza sativa subsp. japonica (Rice), this protein is Transcription factor MYC2.